The primary structure comprises 116 residues: Ribosome-binding factor A (116 aa).

It belongs to the RbfA family. In terms of assembly, monomer. Binds 30S ribosomal subunits, but not 50S ribosomal subunits or 70S ribosomes.

The protein localises to the cytoplasm. One of several proteins that assist in the late maturation steps of the functional core of the 30S ribosomal subunit. Associates with free 30S ribosomal subunits (but not with 30S subunits that are part of 70S ribosomes or polysomes). Required for efficient processing of 16S rRNA. May interact with the 5'-terminal helix region of 16S rRNA. The chain is Ribosome-binding factor A from Clostridium botulinum (strain Eklund 17B / Type B).